Reading from the N-terminus, the 323-residue chain is D-alanine--D-alanine ligase (323 aa).

In terms of domain architecture, ATP-grasp spans 105 to 305 (KQQLVPRGIP…YEDLVEAIVE (201 aa)). 131-188 (PLARPYVLKPVNEGSSVGVAIVTDESNYGNPIRRDAPGPWQEFRELLAEPFIRGRELT) lines the ATP pocket. Mg(2+)-binding residues include aspartate 256, glutamate 272, and asparagine 274.

Belongs to the D-alanine--D-alanine ligase family. It depends on Mg(2+) as a cofactor. The cofactor is Mn(2+).

Its subcellular location is the cytoplasm. The enzyme catalyses 2 D-alanine + ATP = D-alanyl-D-alanine + ADP + phosphate + H(+). Its pathway is cell wall biogenesis; peptidoglycan biosynthesis. Cell wall formation. The protein is D-alanine--D-alanine ligase of Erythrobacter litoralis (strain HTCC2594).